A 399-amino-acid chain; its full sequence is Stage III sporulation protein AE (399 aa).

Residues 1–24 form the signal peptide; it reads MKRFQWVLLLAVLIIAGRAEIVQA. Transmembrane regions (helical) follow at residues 104-124, 140-160, 172-192, 209-229, 248-268, 315-335, and 368-388; these read VLAN…CVIL, AYSI…HVAI, SFIL…GGAV, GLLI…LSIV, IAIG…SVQG, VGIL…IKVL, and IYIF…LTVI.

Interacts with SpoIIIJ and YqjG.

Its subcellular location is the cell membrane. In terms of biological role, required during sporulation for activation of sigma factor SpoIIIG/SigG after engulfment is completed in the prespore. Overexpression in the absence of SpoIIIJ is synthetically lethal. The polypeptide is Stage III sporulation protein AE (spoIIIAE) (Bacillus subtilis (strain 168)).